Here is a 139-residue protein sequence, read N- to C-terminus: Probable disulfide formation protein C (139 aa).

The helical transmembrane segment at 8-27 (EYALLTAWGASFIATLGSLY) threads the bilayer. An intrachain disulfide couples C37 to C40. 2 helical membrane-spanning segments follow: residues 42 to 61 (YQRI…VAKK) and 68 to 85 (YSLP…YHYA). A disulfide bridge connects residues C99 and C104. The helical transmembrane segment at 113 to 135 (GFVTIPFLALIGFITIAVCSFIV) threads the bilayer.

Belongs to the DsbB family. BdbC subfamily.

It is found in the cell membrane. Functionally, required for disulfide bond formation in some proteins. In Bacillus cereus (strain ATCC 14579 / DSM 31 / CCUG 7414 / JCM 2152 / NBRC 15305 / NCIMB 9373 / NCTC 2599 / NRRL B-3711), this protein is Probable disulfide formation protein C.